A 62-amino-acid polypeptide reads, in one-letter code: Photosystem II reaction center protein Z (62 aa).

Transmembrane regions (helical) follow at residues 8 to 28 and 41 to 61; these read AVFA…LVFA and FSGT…NSLI.

It belongs to the PsbZ family. As to quaternary structure, PSII is composed of 1 copy each of membrane proteins PsbA, PsbB, PsbC, PsbD, PsbE, PsbF, PsbH, PsbI, PsbJ, PsbK, PsbL, PsbM, PsbT, PsbY, PsbZ, Psb30/Ycf12, at least 3 peripheral proteins of the oxygen-evolving complex and a large number of cofactors. It forms dimeric complexes.

The protein resides in the plastid. It is found in the chloroplast thylakoid membrane. Functionally, may control the interaction of photosystem II (PSII) cores with the light-harvesting antenna, regulates electron flow through the 2 photosystem reaction centers. PSII is a light-driven water plastoquinone oxidoreductase, using light energy to abstract electrons from H(2)O, generating a proton gradient subsequently used for ATP formation. This Oryza nivara (Indian wild rice) protein is Photosystem II reaction center protein Z.